The primary structure comprises 58 residues: MPDPCCNDKCECKEGECKTGCKCKSCRCPPCDKCSSECKCTSKEECSKTCSKPCSCCP.

The segment at 1–29 is beta; sequence MPDPCCNDKCECKEGECKTGCKCKSCRCP. A divalent metal cation is bound by residues C5, C6, C10, C12, C17, C21, C23, C26, C28, C31, C34, C38, C40, C46, C50, C54, C56, and C57. The alpha stretch occupies residues 30–58; that stretch reads PCDKCSSECKCTSKEECSKTCSKPCSCCP.

Belongs to the metallothionein superfamily. Type 3 family.

In terms of biological role, binds six divalent metal ions. Known to bind copper and cadmium. This is Metallothionein-2B from Callinectes sapidus (Blue crab).